We begin with the raw amino-acid sequence, 297 residues long: HTH-type transcriptional regulator ArgP (297 aa).

One can recognise an HTH lysR-type domain in the interval 4-60 (PDYRTLQALDAVIRERGFERAAQKLCITQSAVSQRIKQLENLFGQPLLVRTVPPRPT). The segment at residues 21-40 (FERAAQKLCITQSAVSQRIK) is a DNA-binding region (H-T-H motif).

The protein belongs to the LysR transcriptional regulatory family. Homodimer.

Functionally, controls the transcription of genes involved in arginine and lysine metabolism. This Serratia proteamaculans (strain 568) protein is HTH-type transcriptional regulator ArgP.